The chain runs to 303 residues: MAAVAVLRAFGASGPMCLRRGPWAQLPARFCSRDPAGAGRRESEPRPTSARQLDGIRNIVLSNPKKRNALSLAMLKSLQSDILHDADSNDLKVIIISAEGPVFSSGHDLKELTEEQGRDYHAEVFQTCSKVMMHIRNHPVPVIAMVNGLAAAAGCQLVASCDIAVASDKSSFATPGVNVGLFCSTPGVALARAVPRKVALEMLFTGEPISAQEALLHGLLSKVVPEAELQEETMRIARKIASLSRPVVSLGKATFYKQLPQDLGTAYYLTSQAMVDNLALRDGQEGITAFLQKRKPVWSHEPV.

The transit peptide at 1 to 17 directs the protein to the mitochondrion; that stretch reads MAAVAVLRAFGASGPMC. An N6-succinyllysine modification is found at lysine 110.

The protein belongs to the enoyl-CoA hydratase/isomerase family. In terms of tissue distribution, expressed in adipocytes. Expressed in blood cells, with higher expression in patients with low coronary lesions.

The protein localises to the mitochondrion. May play a role in fatty acid biosynthesis and insulin sensitivity. In Homo sapiens (Human), this protein is Enoyl-CoA hydratase domain-containing protein 3, mitochondrial.